The chain runs to 415 residues: L-cysteine:1D-myo-inositol 2-amino-2-deoxy-alpha-D-glucopyranoside ligase (415 aa).

A Zn(2+)-binding site is contributed by Cys-47. L-cysteinyl-5'-AMP is bound by residues 47 to 50, Thr-62, and 85 to 87; these read CGIT and NVT. Residues 49-59 carry the 'HIGH' region motif; sequence ITPYDATHLGH. Positions 190–195 match the 'ERGGDP' region motif; that stretch reads ERGGDP. Residue Trp-230 coordinates L-cysteinyl-5'-AMP. Residue Cys-234 coordinates Zn(2+). 252–254 contributes to the L-cysteinyl-5'-AMP binding site; that stretch reads GSD. His-259 is a Zn(2+) binding site. Ile-286 lines the L-cysteinyl-5'-AMP pocket. The 'KMSKS' region motif lies at 292–296; the sequence is KMSKS.

Belongs to the class-I aminoacyl-tRNA synthetase family. MshC subfamily. Monomer. The cofactor is Zn(2+).

The catalysed reaction is 1D-myo-inositol 2-amino-2-deoxy-alpha-D-glucopyranoside + L-cysteine + ATP = 1D-myo-inositol 2-(L-cysteinylamino)-2-deoxy-alpha-D-glucopyranoside + AMP + diphosphate + H(+). In terms of biological role, catalyzes the ATP-dependent condensation of GlcN-Ins and L-cysteine to form L-Cys-GlcN-Ins. This is L-cysteine:1D-myo-inositol 2-amino-2-deoxy-alpha-D-glucopyranoside ligase (mshC) from Mycolicibacterium paratuberculosis (strain ATCC BAA-968 / K-10) (Mycobacterium paratuberculosis).